Reading from the N-terminus, the 156-residue chain is Ribonuclease pancreatic (156 aa).

An N-terminal signal peptide occupies residues 1-28; the sequence is MALEKSLVLLPLLVLILLVLGWVQPSLG. Positions 35 and 38 each coordinate substrate. Residue H40 is the Proton acceptor of the active site. N50 and N62 each carry an N-linked (GlcNAc...) asparagine glycan. 4 disulfide bridges follow: C54-C112, C68-C123, C86-C138, and C93-C100. Substrate is bound by residues 69 to 73 and K94; that span reads KPVNT. N104 is a glycosylation site (N-linked (GlcNAc...) asparagine). R113 lines the substrate pocket. Catalysis depends on H147, which acts as the Proton donor.

The protein belongs to the pancreatic ribonuclease family. As to quaternary structure, monomer. Interacts with and forms tight 1:1 complexes with RNH1. Dimerization of two such complexes may occur. Interaction with RNH1 inhibits this protein. In terms of tissue distribution, pancreas and other tissues and body fluids (indicating it may have other physiological functions besides its role in digestion).

It is found in the secreted. The catalysed reaction is an [RNA] containing cytidine + H2O = an [RNA]-3'-cytidine-3'-phosphate + a 5'-hydroxy-ribonucleotide-3'-[RNA].. It catalyses the reaction an [RNA] containing uridine + H2O = an [RNA]-3'-uridine-3'-phosphate + a 5'-hydroxy-ribonucleotide-3'-[RNA].. Functionally, endonuclease that catalyzes the cleavage of RNA on the 3' side of pyrimidine nucleotides. Acts on single-stranded and double-stranded RNA. In Pongo pygmaeus (Bornean orangutan), this protein is Ribonuclease pancreatic (RNASE1).